The sequence spans 301 residues: MPELPEVETVKRGLAPAMEGARVAKLELRRGDLRFPFPDAFADRVSGRTIVSLGRRAKYLLVDLDDGNTLISHLGMSGSFRIEEGRIEEGAGAATPGEFHHARSKDEKHDHVVFHLESPAGPRRVVYNDPRRFGFMDMVGRADLAAHPFFRDLGPEPTGNELGAAYLAERFRHKAQPLKSALLDQKNIAGLGNIYVCEALWRAHLSPIRAAGTLATAGGRPKEQLNLLVASIRDVIADAITAGGSSLRDHIQTDGSLGYFQHSFSVYDREGQACRTPGCGGTVARIVQAGRSTFYCATCQK.

The active-site Schiff-base intermediate with DNA is P2. The active-site Proton donor is E3. The active-site Proton donor; for beta-elimination activity is the K58. Residues H109, R131, and K174 each coordinate DNA. An FPG-type zinc finger spans residues 265 to 301 (SVYDREGQACRTPGCGGTVARIVQAGRSTFYCATCQK). Residue R291 is the Proton donor; for delta-elimination activity of the active site.

It belongs to the FPG family. As to quaternary structure, monomer. Zn(2+) is required as a cofactor.

The enzyme catalyses Hydrolysis of DNA containing ring-opened 7-methylguanine residues, releasing 2,6-diamino-4-hydroxy-5-(N-methyl)formamidopyrimidine.. The catalysed reaction is 2'-deoxyribonucleotide-(2'-deoxyribose 5'-phosphate)-2'-deoxyribonucleotide-DNA = a 3'-end 2'-deoxyribonucleotide-(2,3-dehydro-2,3-deoxyribose 5'-phosphate)-DNA + a 5'-end 5'-phospho-2'-deoxyribonucleoside-DNA + H(+). Functionally, involved in base excision repair of DNA damaged by oxidation or by mutagenic agents. Acts as a DNA glycosylase that recognizes and removes damaged bases. Has a preference for oxidized purines, such as 7,8-dihydro-8-oxoguanine (8-oxoG). Has AP (apurinic/apyrimidinic) lyase activity and introduces nicks in the DNA strand. Cleaves the DNA backbone by beta-delta elimination to generate a single-strand break at the site of the removed base with both 3'- and 5'-phosphates. The protein is Formamidopyrimidine-DNA glycosylase of Rhizobium leguminosarum bv. trifolii (strain WSM2304).